The following is a 549-amino-acid chain: Cytoplasmic trehalase (549 aa).

Substrate-binding positions include Arg168, 175 to 176 (WD), Asn212, 221 to 223 (RSQ), 292 to 294 (RDE), and Gly324. Catalysis depends on proton donor/acceptor residues Asp326 and Glu509. A substrate-binding site is contributed by Glu525.

This sequence belongs to the glycosyl hydrolase 37 family. As to quaternary structure, monomer.

It localises to the cytoplasm. It carries out the reaction alpha,alpha-trehalose + H2O = alpha-D-glucose + beta-D-glucose. It participates in glycan degradation; trehalose degradation; D-glucose from alpha,alpha-trehalose: step 1/1. Its function is as follows. Hydrolyzes trehalose to glucose. Could be involved, in cells returning to low osmolarity conditions, in the utilization of the accumulated cytoplasmic trehalose, which was synthesized in response to high osmolarity. In Shigella boydii serotype 4 (strain Sb227), this protein is Cytoplasmic trehalase.